Here is a 616-residue protein sequence, read N- to C-terminus: MALKSSSADGKTRSSVQIFIVFSLCCFFYILGAWQRSGFGKGDSIALEMTNSGADCNIVPSLNFETHHAGESSLVGASEAAKVKAFEPCDGRYTDYTPCQDQRRAMTFPRDSMIYRERHCAPENEKLHCLIPAPKGYVTPFSWPKSRDYVPYANAPYKALTVEKAIQNWIQYEGDVFRFPGGGTQFPQGADKYIDQLASVIPMENGTVRTALDTGCGVASWGAYLWSRNVRAMSFAPRDSHEAQVQFALERGVPAVIGVLGTIKLPYPTRAFDMAHCSRCLIPWGANDGMYLMEVDRVLRPGGYWILSGPPINWKVNYKAWQRPKEDLQEEQRKIEEAAKLLCWEKKYEHGEIAIWQKRVNDEACRSRQDDPRANFCKTDDTDDVWYKKMEACITPYPETSSSDEVAGGELQAFPDRLNAVPPRISSGSISGVTVDAYEDDNRQWKKHVKAYKRINSLLDTGRYRNIMDMNAGFGGFAAALESQKLWVMNVVPTIAEKNRLGVVYERGLIGIYHDWCEAFSTYPRTYDLIHANHLFSLYKNKCNADDILLEMDRILRPEGAVIIRDDVDTLIKVKRIIAGMRWDAKLVDHEDGPLVPEKVLIAVKQYWVTNSTSTH.

Residues 1–13 (MALKSSSADGKTR) are Cytoplasmic-facing. Residues 14–34 (SSVQIFIVFSLCCFFYILGAW) form a helical; Signal-anchor for type II membrane protein membrane-spanning segment. Topologically, residues 35-616 (QRSGFGKGDS…YWVTNSTSTH (582 aa)) are lumenal. N205 and N611 each carry an N-linked (GlcNAc...) asparagine glycan.

This sequence belongs to the methyltransferase superfamily.

Its subcellular location is the golgi apparatus membrane. The sequence is that of Probable methyltransferase PMT2 from Arabidopsis thaliana (Mouse-ear cress).